Reading from the N-terminus, the 1351-residue chain is uncharacterized protein (1351 aa).

Basic and acidic residues predominate over residues Met1–Asn17. A disordered region spans residues Met1–Asp31. Positions Asp19–Asp31 are enriched in low complexity.

This is an uncharacterized protein from Acanthamoeba polyphaga mimivirus (APMV).